Consider the following 195-residue polypeptide: CASP-like protein 1E2 (195 aa).

The Cytoplasmic segment spans residues 1 to 29; it reads MEVESKTSFGGMESKSKEVKVVTGGKLRP. The chain crosses the membrane as a helical span at residues 30-50; sequence FDLVLRVVALALTLVAAVLLG. Residues 51–82 lie on the Extracellular side of the membrane; the sequence is VDKQTKVVSLQLLPTLPPMDVPVTAKWRYLSA. The helical transmembrane segment at 83–103 threads the bilayer; sequence FVYFVVSNAIACSYAALSLLL. At 104-122 the chain is on the cytoplasmic side; it reads SVGNSKGNKGLGLAITVMD. Residues 123–143 traverse the membrane as a helical segment; sequence LVMVALLFSSNGAAGAIGLMG. Residues 144–165 lie on the Extracellular side of the membrane; it reads YEGNSRVRWGKVCNVFGKFCNQ. The chain crosses the membrane as a helical span at residues 166 to 186; it reads VAVALGLSFFGGLAFFLLVVM. Over 187–195 the chain is Cytoplasmic; it reads AAFALNKRH.

It belongs to the Casparian strip membrane proteins (CASP) family. Homodimer and heterodimers.

It localises to the cell membrane. This is CASP-like protein 1E2 from Vitis vinifera (Grape).